The chain runs to 352 residues: tRNA pseudouridine synthase D (352 aa).

Catalysis depends on D81, which acts as the Nucleophile. The TRUD domain maps to 157–303 (GIPNYFGAQR…MEHERRILRL (147 aa)).

The protein belongs to the pseudouridine synthase TruD family.

The catalysed reaction is uridine(13) in tRNA = pseudouridine(13) in tRNA. In terms of biological role, responsible for synthesis of pseudouridine from uracil-13 in transfer RNAs. This chain is tRNA pseudouridine synthase D, found in Pseudomonas syringae pv. syringae (strain B728a).